Consider the following 346-residue polypeptide: 4-hydroxy-2-oxovalerate aldolase (346 aa).

The Pyruvate carboxyltransferase domain maps to 8–260 (VILHDMSLRD…ETGIDLYKIM (253 aa)). A substrate-binding site is contributed by 16–17 (RD). Asp-17 is a Mn(2+) binding site. The Proton acceptor role is filled by His-20. 2 residues coordinate substrate: Ser-170 and His-199. Residues His-199 and His-201 each contribute to the Mn(2+) site. Tyr-290 is a substrate binding site.

The protein belongs to the 4-hydroxy-2-oxovalerate aldolase family.

The enzyme catalyses (S)-4-hydroxy-2-oxopentanoate = acetaldehyde + pyruvate. The protein operates within aromatic compound metabolism; naphthalene degradation. In Pseudomonas putida (Arthrobacter siderocapsulatus), this protein is 4-hydroxy-2-oxovalerate aldolase (nahM).